Here is a 58-residue protein sequence, read N- to C-terminus: Ribosome biogenesis protein Nop10 (58 aa).

This sequence belongs to the NOP10 family.

Functionally, involved in ribosome biogenesis; more specifically in 18S rRNA pseudouridylation and in cleavage of pre-rRNA. This Thermococcus onnurineus (strain NA1) protein is Ribosome biogenesis protein Nop10.